A 167-amino-acid polypeptide reads, in one-letter code: Mannose-specific lectin (167 aa).

The first 24 residues, 1–24, serve as a signal peptide directing secretion; that stretch reads MAFSISSTMIFLLSLALFSTLVSA. The Bulb-type lectin domain maps to 25 to 138; the sequence is DNHLLPGERL…PIFATGTNRF (114 aa). Cysteine 53 and cysteine 76 are oxidised to a cystine.

Homotetramer. In terms of tissue distribution, expressed in the pseudobulb, with highest levels of expression in the non-swollen internode (at protein level).

It is found in the secreted. In terms of biological role, mannose-specific lectin. Shows agglutinating activity towards chicken erythrocytes. Has antifungal activity against A.alternata and Collectotrichum species. The chain is Mannose-specific lectin from Dendrobium findlayanum (Findlay's orchid).